Here is a 527-residue protein sequence, read N- to C-terminus: UPF0053 protein YegH (527 aa).

Transmembrane regions (helical) follow at residues Ile14–Leu34, Leu51–Leu71, Phe81–Ala101, Gly122–Asp142, Ile145–Ile165, Ile185–Phe205, and Phe207–Leu227. CBS domains are found at residues Met306–Leu366 and Leu371–Val429.

The protein belongs to the UPF0053 family.

It localises to the cell membrane. This Shigella flexneri protein is UPF0053 protein YegH (yegH).